The sequence spans 561 residues: Potassium-transporting ATPase potassium-binding subunit (561 aa).

The next 12 helical transmembrane spans lie at 5–25 (LAAG…YVPV), 60–80 (YGYA…LYAL), 86–106 (VLPL…NTAV), 131–151 (GLAV…VALI), 177–197 (ILLP…VIQS), 247–267 (PTPV…VSLT), 281–301 (LTLL…TLAA), 324–344 (FGIP…TGAV), 376–396 (GLYG…LLVG), 415–435 (ALSV…TVIL), 488–508 (ALGL…LALA), and 537–557 (GTVV…GPIA).

This sequence belongs to the KdpA family. In terms of assembly, the system is composed of three essential subunits: KdpA, KdpB and KdpC.

It localises to the cell membrane. Part of the high-affinity ATP-driven potassium transport (or Kdp) system, which catalyzes the hydrolysis of ATP coupled with the electrogenic transport of potassium into the cytoplasm. This subunit binds the extracellular potassium ions and delivers the ions to the membrane domain of KdpB through an intramembrane tunnel. This is Potassium-transporting ATPase potassium-binding subunit from Rhodococcus opacus (strain B4).